The chain runs to 290 residues: Undecaprenyl-diphosphatase (290 aa).

Transmembrane regions (helical) follow at residues 1-21, 48-68, 101-121, 125-145, 161-181, 202-222, 231-251, and 266-286; these read MFLL…LTEF, SAFT…AWVF, IHVL…DDLI, LFSV…MIIA, INYF…WPGF, SDFT…LSLL, AHIP…LIAI, and FAIY…GFGI.

It belongs to the UppP family.

The protein resides in the cell membrane. The catalysed reaction is di-trans,octa-cis-undecaprenyl diphosphate + H2O = di-trans,octa-cis-undecaprenyl phosphate + phosphate + H(+). In terms of biological role, catalyzes the dephosphorylation of undecaprenyl diphosphate (UPP). Confers resistance to bacitracin. This Staphylococcus epidermidis (strain ATCC 35984 / DSM 28319 / BCRC 17069 / CCUG 31568 / BM 3577 / RP62A) protein is Undecaprenyl-diphosphatase.